Consider the following 353-residue polypeptide: Serine proteinase inhibitor 1 (353 aa).

It belongs to the serpin family. Poxviruses subfamily.

The protein localises to the host cytoplasm. Its function is as follows. Plays a role in mediating viral host range. May act to inhibit a caspase independent form of apoptosis to allow efficient virus replication in infected cells. The protein is Serine proteinase inhibitor 1 (OPG208) of Vaccinia virus (strain Copenhagen) (VACV).